Consider the following 360-residue polypeptide: Phospho-N-acetylmuramoyl-pentapeptide-transferase (360 aa).

A run of 10 helical transmembrane segments spans residues 27–47, 70–90, 98–118, 134–154, 168–188, 199–219, 239–259, 263–283, 288–308, and 337–357; these read GALF…ISLL, GTPT…ILLW, VWVT…DDYL, LLLE…YSPA, ALLN…VGAG, GLAI…AYLV, LAVV…FNAP, IFMG…IAVA, IVLA…IIQV, and QVVI…LATL.

It belongs to the glycosyltransferase 4 family. MraY subfamily. Mg(2+) is required as a cofactor.

It localises to the cell inner membrane. It catalyses the reaction UDP-N-acetyl-alpha-D-muramoyl-L-alanyl-gamma-D-glutamyl-meso-2,6-diaminopimeloyl-D-alanyl-D-alanine + di-trans,octa-cis-undecaprenyl phosphate = di-trans,octa-cis-undecaprenyl diphospho-N-acetyl-alpha-D-muramoyl-L-alanyl-D-glutamyl-meso-2,6-diaminopimeloyl-D-alanyl-D-alanine + UMP. Its pathway is cell wall biogenesis; peptidoglycan biosynthesis. Its function is as follows. Catalyzes the initial step of the lipid cycle reactions in the biosynthesis of the cell wall peptidoglycan: transfers peptidoglycan precursor phospho-MurNAc-pentapeptide from UDP-MurNAc-pentapeptide onto the lipid carrier undecaprenyl phosphate, yielding undecaprenyl-pyrophosphoryl-MurNAc-pentapeptide, known as lipid I. The protein is Phospho-N-acetylmuramoyl-pentapeptide-transferase of Methylorubrum populi (strain ATCC BAA-705 / NCIMB 13946 / BJ001) (Methylobacterium populi).